The primary structure comprises 685 residues: MPEQNRILCRELSLLAFNRRVLAQAEDKNVPLLERLRFLCIVSSNLDEFFEVRMAWLKRENKLHPRRRLDNGKMPSETIADVTEAARSLIRHQYDLFNNVLQPELARESIHFYRRRNWTGAQKKWIEDYFDRELLPILTPIGLDPSHPFPRPLNKSLNFAVELDGTDAFGRPSGMAIVQAPRILPRVVPLPSELCGGGHGFVFLSSILHAHVGKLFPGMNVKGCHQFRLTRDSDLTVDEEDLQNLRAAIQNELHDREYGDGVRLEVADTCPAYIRDFLLAQFKLTAAELYQVKGPVNLVRLNAVPDLVNRPDLKFPTHTPGRLKALGKTASIFDLVRQSPILLHHPYQSFDPVVEMMREAAADPDVLAVKMTIYRTGTRSELVRALMKAALAGKQVTVVVELMARFDEANNVNWAKQLEEAGAHVVYGVFGYKVHAKMALVIRREDGVLKRYAHLGTGNYHQGTSRIYTDFGIITADEQITADVNTLFMEITGLGKPGRLNKLYQSPFTLHKMVIDRIARETEHAKAGKPARITAKMNSLIEPTVIEALYRASAAGVQIDLIVRGMCTLRPGVKGLSENIRVRSIIGRQLEHARVYCFHNNGADDTFISSADWMGRNFFRRIETAAPITAPELKKRVIREGLEMALADNTHAWLMQPDGGYIRAAPAEGESEADLQNDLWTLLGG.

Position 45 (Asn-45) interacts with ATP. Mg(2+) is bound by residues Arg-375 and Arg-405. The Phosphohistidine intermediate role is filled by His-435. Residues Tyr-468, Arg-564, and His-592 each coordinate ATP.

Belongs to the polyphosphate kinase 1 (PPK1) family. The cofactor is Mg(2+). Post-translationally, an intermediate of this reaction is the autophosphorylated ppk in which a phosphate is covalently linked to a histidine residue through a N-P bond.

It carries out the reaction [phosphate](n) + ATP = [phosphate](n+1) + ADP. Catalyzes the reversible transfer of the terminal phosphate of ATP to form a long-chain polyphosphate (polyP). The polypeptide is Polyphosphate kinase (Neisseria meningitidis serogroup A / serotype 4A (strain DSM 15465 / Z2491)).